The following is a 366-amino-acid chain: MSGNTIGKLFTVTTFGESHGPALGAIVDGCPPGLALSEADLQRDLDRRRPGTSKFTTQRKEPDQVRILSGVFEGRTTGTPIGLLIENTDQRSKDYAEIARRFRPGHADYTYLQKYGIRDYRGGGRSSARETAMRVAAGGIARKYLRERLGVTVQGCLTQLGPIELGIKDWMAVDDNPFFCADPERVPDLESFMQDLRKAGNSIGAAVTVVARGCPPGLGEPVFDRLDADLAHALMSINAVKGVELGAGFASVMQHGSEHRDELTPEGFASNNAGGVLGGLSTGQDVVTRIALKPTSSIVVPGRTIDTEGEPVPVVTKGRHDPCVGIRAVPIAEAMVALTLMDHWLRHRAQCADVQPETPPIPAANR.

Arg-48 contributes to the NADP(+) binding site. Residues 125 to 127 (RSS), 238 to 239 (NA), Gly-278, 293 to 297 (KPTSS), and Arg-319 contribute to the FMN site.

It belongs to the chorismate synthase family. In terms of assembly, homotetramer. The cofactor is FMNH2.

The catalysed reaction is 5-O-(1-carboxyvinyl)-3-phosphoshikimate = chorismate + phosphate. The protein operates within metabolic intermediate biosynthesis; chorismate biosynthesis; chorismate from D-erythrose 4-phosphate and phosphoenolpyruvate: step 7/7. Its function is as follows. Catalyzes the anti-1,4-elimination of the C-3 phosphate and the C-6 proR hydrogen from 5-enolpyruvylshikimate-3-phosphate (EPSP) to yield chorismate, which is the branch point compound that serves as the starting substrate for the three terminal pathways of aromatic amino acid biosynthesis. This reaction introduces a second double bond into the aromatic ring system. In Alkalilimnicola ehrlichii (strain ATCC BAA-1101 / DSM 17681 / MLHE-1), this protein is Chorismate synthase.